The following is a 544-amino-acid chain: Probable protein kinase UbiB (544 aa).

Residues 1–21 traverse the membrane as a helical segment; sequence MIFGELRRLYLIIGVMLSYGL. Residues 123-500 form the Protein kinase domain; the sequence is DFQQEPLASA…HVRQSQSRFL (378 aa). Residues 129 to 137 and K151 contribute to the ATP site; that span reads LASASIAQV. Catalysis depends on D286, which acts as the Proton acceptor. A run of 2 helical transmembrane segments spans residues 499-519 and 520-540; these read FLFGIGATLLLIGTFLMTQGA and DEGSLPAWLMAAGTVSWIIGW.

The protein belongs to the ABC1 family. UbiB subfamily.

It is found in the cell inner membrane. Its pathway is cofactor biosynthesis; ubiquinone biosynthesis [regulation]. Functionally, is probably a protein kinase regulator of UbiI activity which is involved in aerobic coenzyme Q (ubiquinone) biosynthesis. This Sodalis glossinidius (strain morsitans) protein is Probable protein kinase UbiB.